The following is a 677-amino-acid chain: Pannexin-2 (677 aa).

Residues 11-53 (MATALLAGEKLRELILPGSQDDKAGALAALLLQLKLELPFDRV) are Cytoplasmic-facing. Residues 54 to 74 (VTIGTVLVPILLVTLVFTKNF) form a helical membrane-spanning segment. The Extracellular portion of the chain corresponds to 75–125 (AEEPIYCYTPHNFTRDQALYARGYCWTELRDALPGVDASLWPSLFEHKFLP). N86 carries an N-linked (GlcNAc...) asparagine glycan. Residues 126-146 (YALLAFAAIMYVPALGWEFLA) traverse the membrane as a helical segment. Over 147-230 (STRLTSELNF…NFLAKLYLAR (84 aa)) the chain is Cytoplasmic. The helical transmembrane segment at 231 to 251 (HVLILLLSVVPISYLCTYYAT) threads the bilayer. Over 252-295 (QKQNEFTCALGASPDGPVGSAGPTVRVSCKLPSVQLQRIIAGVD) the chain is Extracellular. The chain crosses the membrane as a helical span at residues 296–316 (IVLLCFMNLIILVNLIHLFIF). The Cytoplasmic portion of the chain corresponds to 317–617 (RKSNFIFDKL…LGKADPLTIL (301 aa)). The span at 394–408 (TTPTVRDSGIQTVDP) shows a compositional bias: polar residues. Disordered regions lie at residues 394-425 (TTPTVRDSGIQTVDPSINPAEPDGSAEPPVVK) and 485-512 (AHHYKGSGGDSGPSSAPPAASEKKHTRH). Phosphoserine occurs at positions 593 and 604.

The protein belongs to the pannexin family. As to quaternary structure, homoheptameric. In terms of processing, S-palmitoylated in neural stem and progenitor cells. Post-translationally, cleaved by CASP3 and CASP7 during apoptosis. Cleavage has no effect on it function. Expression is enriched in central nervous system. Expressed in suprabasal layers of skin epidermis. In terms of tissue distribution, more aboundantly expressed in skin.

It localises to the cell membrane. It is found in the golgi apparatus membrane. The protein resides in the endoplasmic reticulum membrane. It catalyses the reaction ATP(in) = ATP(out). The catalysed reaction is chloride(in) = chloride(out). The enzyme catalyses iodide(out) = iodide(in). It carries out the reaction Na(+)(in) = Na(+)(out). It catalyses the reaction D-gluconate(in) = D-gluconate(out). Its function is as follows. Ion channel with a slight anion preference. Also able to release ATP. Plays a role in regulating neurogenesis and apoptosis in keratinocytes. The polypeptide is Pannexin-2 (Panx2) (Mus musculus (Mouse)).